The sequence spans 371 residues: Putative transport protein YtvI (371 aa).

A run of 9 helical transmembrane segments spans residues 6 to 26 (ITIF…IAAA), 30 to 50 (FPLT…HPVV), 65 to 85 (VLGV…ILVA), 168 to 188 (FFAL…ATFF), 225 to 245 (GFIK…FIGL), 256 to 276 (IAFL…SVFV), 283 to 303 (SITG…VVLI), 312 to 332 (ILSK…FAGF), and 334 to 354 (LFGF…QAFI).

Belongs to the autoinducer-2 exporter (AI-2E) (TC 2.A.86) family.

The protein localises to the cell membrane. This chain is Putative transport protein YtvI (ytvI), found in Bacillus subtilis (strain 168).